The primary structure comprises 110 residues: Nucleotide-binding protein HI1146 homolog (110 aa).

This sequence belongs to the RapZ-like family.

Functionally, displays ATPase and GTPase activities. The polypeptide is Nucleotide-binding protein HI1146 homolog (Aggregatibacter actinomycetemcomitans (Actinobacillus actinomycetemcomitans)).